The primary structure comprises 678 residues: uncharacterized protein (678 aa).

Helical transmembrane passes span 14–34 (LMFA…WTGL) and 180–200 (GAVI…IGGF).

Belongs to the mycobacterial PPE family.

Its subcellular location is the cell membrane. This is an uncharacterized protein from Mycobacterium tuberculosis (strain CDC 1551 / Oshkosh).